Here is a 426-residue protein sequence, read N- to C-terminus: Mannose-1-phosphate guanyltransferase alpha-B (426 aa).

The protein belongs to the transferase hexapeptide repeat family.

It catalyses the reaction alpha-D-mannose 1-phosphate + GTP + H(+) = GDP-alpha-D-mannose + diphosphate. It participates in nucleotide-sugar biosynthesis; GDP-alpha-D-mannose biosynthesis; GDP-alpha-D-mannose from alpha-D-mannose 1-phosphate (GTP route): step 1/1. The sequence is that of Mannose-1-phosphate guanyltransferase alpha-B (gmppa-b) from Xenopus laevis (African clawed frog).